A 183-amino-acid chain; its full sequence is ATP synthase subunit delta (183 aa).

It belongs to the ATPase delta chain family. As to quaternary structure, F-type ATPases have 2 components, F(1) - the catalytic core - and F(0) - the membrane proton channel. F(1) has five subunits: alpha(3), beta(3), gamma(1), delta(1), epsilon(1). CF(0) has four main subunits: a(1), b(1), b'(1) and c(10-14). The alpha and beta chains form an alternating ring which encloses part of the gamma chain. F(1) is attached to F(0) by a central stalk formed by the gamma and epsilon chains, while a peripheral stalk is formed by the delta, b and b' chains.

Its subcellular location is the cellular thylakoid membrane. F(1)F(0) ATP synthase produces ATP from ADP in the presence of a proton or sodium gradient. F-type ATPases consist of two structural domains, F(1) containing the extramembraneous catalytic core and F(0) containing the membrane proton channel, linked together by a central stalk and a peripheral stalk. During catalysis, ATP synthesis in the catalytic domain of F(1) is coupled via a rotary mechanism of the central stalk subunits to proton translocation. Its function is as follows. This protein is part of the stalk that links CF(0) to CF(1). It either transmits conformational changes from CF(0) to CF(1) or is implicated in proton conduction. The protein is ATP synthase subunit delta of Prochlorococcus marinus (strain SARG / CCMP1375 / SS120).